A 57-amino-acid polypeptide reads, in one-letter code: MAEIKVGKNETLDSALRRFKKQCSKSGVLSEAKKRKHYEKPSEKRKRKATEKRNSRK.

The tract at residues Gln22–Lys57 is disordered. Basic residues predominate over residues Lys33 to Lys57.

The protein belongs to the bacterial ribosomal protein bS21 family.

The polypeptide is Small ribosomal subunit protein bS21 (Natranaerobius thermophilus (strain ATCC BAA-1301 / DSM 18059 / JW/NM-WN-LF)).